The following is a 119-amino-acid chain: Large ribosomal subunit protein bL19 (119 aa).

This sequence belongs to the bacterial ribosomal protein bL19 family.

This protein is located at the 30S-50S ribosomal subunit interface and may play a role in the structure and function of the aminoacyl-tRNA binding site. In Mycoplasma genitalium (strain ATCC 33530 / DSM 19775 / NCTC 10195 / G37) (Mycoplasmoides genitalium), this protein is Large ribosomal subunit protein bL19 (rplS).